The chain runs to 587 residues: Arginine--tRNA ligase (587 aa).

A 'HIGH' region motif is present at residues 127-137 (PNLAKEMHVGH).

The protein belongs to the class-I aminoacyl-tRNA synthetase family. Monomer.

It localises to the cytoplasm. The catalysed reaction is tRNA(Arg) + L-arginine + ATP = L-arginyl-tRNA(Arg) + AMP + diphosphate. The protein is Arginine--tRNA ligase of Pseudomonas aeruginosa (strain LESB58).